The primary structure comprises 158 residues: Cytochrome c2 (158 aa).

At Gln1 the chain carries Pyrrolidone carboxylic acid. The heme c site is built by Cys18, Cys21, His22, and Met102. Residues 129–158 are disordered; it reads AEAAPAADAAAPAAADAAAPAEPAAEGAAT.

The protein belongs to the cytochrome c family. Binds 1 heme c group covalently per subunit.

Its subcellular location is the periplasm. Its function is as follows. Cytochrome c2 is found mainly in purple, non-sulfur, photosynthetic bacteria where it functions as the electron donor to the oxidized bacteriochlorophyll in the photophosphorylation pathway. However, it may also have a role in the respiratory chain and is found in some non-photosynthetic bacteria. This chain is Cytochrome c2, found in Fuscovulum blasticum (Rhodobacter blasticus).